We begin with the raw amino-acid sequence, 174 residues long: Ribosome maturation factor RimM (174 aa).

Residues 96-169 (KDTFFICDLI…KMVVDLPQGL (74 aa)) enclose the PRC barrel domain.

The protein belongs to the RimM family. Binds ribosomal protein uS19.

It localises to the cytoplasm. An accessory protein needed during the final step in the assembly of 30S ribosomal subunit, possibly for assembly of the head region. Essential for efficient processing of 16S rRNA. May be needed both before and after RbfA during the maturation of 16S rRNA. It has affinity for free ribosomal 30S subunits but not for 70S ribosomes. This is Ribosome maturation factor RimM from Acetivibrio thermocellus (strain ATCC 27405 / DSM 1237 / JCM 9322 / NBRC 103400 / NCIMB 10682 / NRRL B-4536 / VPI 7372) (Clostridium thermocellum).